The following is a 146-amino-acid chain: 3-dehydroquinate dehydratase (146 aa).

Y23 acts as the Proton acceptor in catalysis. Residues N75, H81, and D88 each contribute to the substrate site. Residue H101 is the Proton donor of the active site. Residues 102-103 (LS) and R112 contribute to the substrate site.

The protein belongs to the type-II 3-dehydroquinase family. Homododecamer.

It catalyses the reaction 3-dehydroquinate = 3-dehydroshikimate + H2O. The protein operates within metabolic intermediate biosynthesis; chorismate biosynthesis; chorismate from D-erythrose 4-phosphate and phosphoenolpyruvate: step 3/7. Functionally, catalyzes a trans-dehydration via an enolate intermediate. In Marinobacter nauticus (strain ATCC 700491 / DSM 11845 / VT8) (Marinobacter aquaeolei), this protein is 3-dehydroquinate dehydratase.